Reading from the N-terminus, the 252-residue chain is MGFYEGDDNDANTKAFNDKYIKDQKFATAPFWNLFPKLRDIDEYDNPLLPLPFNFNFRDLGDSALAMASGIPTVKQFDKCEELKGQSAWTTQGIWKCLVPSKAIPPLPQLDFLLPLEEIKSDKSHSHGLFFNDFNLFLKWRSHMNRLQKQRIKTRSTAVEPLARTPEDLMLNWDDLHLGNDAEYASADGSKKIVGRAQSISTTKDSNDAKPSTVKTEKIYFDDGTVDITTTTTSKGSSPQVKHKVVSVDEDN.

The interval 230–252 is disordered; it reads TTTTSKGSSPQVKHKVVSVDEDN.

It localises to the mitochondrion membrane. In Saccharomyces cerevisiae (strain ATCC 204508 / S288c) (Baker's yeast), this protein is Mitochondrial peculiar membrane protein 1 (MPM1).